A 508-amino-acid chain; its full sequence is Ell-associated factor Eaf (508 aa).

2 stretches are compositionally biased toward polar residues: residues 140 to 150 (GQGQLHSQGAN) and 161 to 190 (GHST…SRRN). Disordered stretches follow at residues 140 to 226 (GQGQ…WDAN) and 251 to 508 (HNSG…DDDE). At Ser200 the chain carries Phosphoserine. A compositionally biased stretch (low complexity) spans 251–268 (HNSGHANTSGSSTGSATG). Polar residues-rich tracts occupy residues 272-281 (FGSTSSSSHM) and 296-313 (QQMQ…QQPS). A compositionally biased stretch (low complexity) spans 314-341 (NYGRGYNGGHNHVQQQQQRNSPQQQRPP). The span at 391 to 406 (DSSDSDSGSDSDDSTE) shows a compositional bias: acidic residues. 3 stretches are compositionally biased toward low complexity: residues 412-444 (QGQQ…HLNQ), 461-477 (HQHQ…QKQQ), and 489-502 (NDLL…SSNS).

Belongs to the EAF family.

It localises to the nucleus. In terms of biological role, promotes transcriptional elongation by Su(Tpl)/ELL. Essential for development. In Drosophila erecta (Fruit fly), this protein is Ell-associated factor Eaf.